The sequence spans 643 residues: Zinc finger protein 23 (643 aa).

The region spanning 1-43 (MLENYGNVASLGFPLLKPAVISQLEGGSELGGSSPLAAGTGLQ) is the KRAB domain. Lysine 157 participates in a covalent cross-link: Glycyl lysine isopeptide (Lys-Gly) (interchain with G-Cter in SUMO2). Residues 168–190 (FKCEELVEPFRCDSQLIQHQENN) form a C2H2-type 1; degenerate zinc finger. 16 C2H2-type zinc fingers span residues 196 to 218 (YQCSECGKAFSINEKLIWHQRLH), 224 to 246 (FKCVECGKSFSYSSHYITHQTIH), 252 to 274 (YQCKMCGKAFSVNGSLSRHQRIH), 280 to 302 (YQCKECGNGFSCSSAYITHQRVH), 308 to 330 (YECNDCGKAFNVNAKLIQHQRIH), 336 to 358 (YECNECGKGFRCSSQLRQHQSIH), 364 to 386 (YQCKECGKGFNNNTKLIQHQRIH), 392 to 414 (YECTECGKAFSVKGKLIQHQRIH), 420 to 442 (YECNECGKAFRCNSQFRQHLRIH), 448 to 470 (YECNECGKAFSVNGKLMRHQRIH), 476 to 498 (FECNECGRCFTSKRNLLDHHRIH), 504 to 526 (YQCKECGKAFSINAKLTRHQRIH), 532 to 554 (FKCMECEKAFSCSSNYIVHQRIH), 560 to 582 (FQCKECGKAFHVNAHLIRHQRSH), 588 to 610 (FRCVECGKGFSFSSDYIIHQTVH), and 616 to 638 (YMCSVCGKAFRFSFQLSQHQSVH).

This sequence belongs to the krueppel C2H2-type zinc-finger protein family.

The protein localises to the nucleus. May be involved in transcriptional regulation. May have a role in embryonic development. In Homo sapiens (Human), this protein is Zinc finger protein 23 (ZNF23).